Here is a 274-residue protein sequence, read N- to C-terminus: tRNA pseudouridine synthase A (274 aa).

Residue D56 is the Nucleophile of the active site. Residue Y109 coordinates substrate.

This sequence belongs to the tRNA pseudouridine synthase TruA family.

It carries out the reaction uridine(38/39/40) in tRNA = pseudouridine(38/39/40) in tRNA. Functionally, formation of pseudouridine at positions 38, 39 and 40 in the anticodon stem and loop of transfer RNAs. This chain is tRNA pseudouridine synthase A, found in Methanosphaera stadtmanae (strain ATCC 43021 / DSM 3091 / JCM 11832 / MCB-3).